The primary structure comprises 473 residues: Lactate utilization protein B (473 aa).

4Fe-4S ferredoxin-type domains are found at residues 302–332 and 351–380; these read GSEF…GHSY and YDDY…LHDL. The [4Fe-4S] cluster site is built by Cys-311, Cys-314, Cys-317, Cys-321, Cys-364, Cys-367, and Cys-371.

This sequence belongs to the LutB/YkgF family.

Functionally, is involved in L-lactate degradation and allows cells to grow with lactate as the sole carbon source. Has probably a role as an electron transporter during oxidation of L-lactate. The protein is Lactate utilization protein B of Bacillus cytotoxicus (strain DSM 22905 / CIP 110041 / 391-98 / NVH 391-98).